The following is a 308-amino-acid chain: Aliphatic nitrilase (308 aa).

In terms of domain architecture, CN hydrolase spans 4–270; that stretch reads FRAAVVQAAP…ETILTADLDT (267 aa). The Proton acceptor role is filled by glutamate 44. Lysine 130 is a catalytic residue. Residue cysteine 164 is the Nucleophile of the active site.

Belongs to the carbon-nitrogen hydrolase superfamily. Nitrilase family.

It carries out the reaction a nitrile + 2 H2O = a carboxylate + NH4(+). Functionally, nitrilase that hydrolyzes preferentially phenylacetonitrile, but not (R,S)-mandelonitrile. Also acts on dinitriles like phenylenediacetonitriles (PDAs) 1,2-PDA, 1,3-PDA, and 1,4-PDA, and cyanophenyl acetonitriles (CPAs) 2-CPA and 4-CPA, but with lower activities. This Sinorhizobium fredii (strain HH103) protein is Aliphatic nitrilase (nit).